Consider the following 270-residue polypeptide: Nuclease P1 (270 aa).

Residues Trp1, His6, His15, Asp45, and His60 each coordinate a divalent metal cation. Residue 1-6 (WGALGH) coordinates substrate. Substrate-binding positions include 45–51 (DEYRLTS), 60–63 (HFID), and 73–78 (NVDYER). Disulfide bonds link Cys72-Cys217 and Cys80-Cys85. Asn92 is a glycosylation site (N-linked (GlcNAc...) asparagine). A divalent metal cation-binding residues include His116, Asp120, and His126. Residues 116–164 (HFIGDMTQPLHDEAYAVGGNKINVTFDGYHDNLHSDWDTYMPQKLIGGH) form a substrate binding region. A glycan (N-linked (GlcNAc...) asparagine) is linked at Asn138. Residues His149 and Asp153 each contribute to the a divalent metal cation site. Residues Asn184 and Asn197 are each glycosylated (N-linked (GlcNAc...) asparagine).

Belongs to the nuclease type I family. Zn(2+) serves as cofactor.

The protein resides in the secreted. It carries out the reaction Endonucleolytic cleavage to 5'-phosphomononucleotide and 5'-phosphooligonucleotide end-products.. Hydrolyzes only single-stranded DNA and RNA without apparent specificity for bases. The polypeptide is Nuclease P1 (Penicillium citrinum).